The primary structure comprises 472 residues: 3-isopropylmalate dehydratase large subunit (472 aa).

Positions 347, 407, and 410 each coordinate [4Fe-4S] cluster.

It belongs to the aconitase/IPM isomerase family. LeuC type 1 subfamily. Heterodimer of LeuC and LeuD. [4Fe-4S] cluster is required as a cofactor.

It carries out the reaction (2R,3S)-3-isopropylmalate = (2S)-2-isopropylmalate. The protein operates within amino-acid biosynthesis; L-leucine biosynthesis; L-leucine from 3-methyl-2-oxobutanoate: step 2/4. In terms of biological role, catalyzes the isomerization between 2-isopropylmalate and 3-isopropylmalate, via the formation of 2-isopropylmaleate. The chain is 3-isopropylmalate dehydratase large subunit from Parasynechococcus marenigrum (strain WH8102).